Here is a 101-residue protein sequence, read N- to C-terminus: Protein translation factor SUI1 homolog (101 aa).

The protein belongs to the SUI1 family.

The sequence is that of Protein translation factor SUI1 homolog from Methanothermobacter thermautotrophicus (strain ATCC 29096 / DSM 1053 / JCM 10044 / NBRC 100330 / Delta H) (Methanobacterium thermoautotrophicum).